A 318-amino-acid chain; its full sequence is 1-aminocyclopropane-1-carboxylate oxidase 1 (318 aa).

The region spanning 153 to 254 (PTFGTKVSNY…RMSIASFYNP (102 aa)) is the Fe2OG dioxygenase domain. The Fe cation site is built by H177, D179, and H234.

Belongs to the iron/ascorbate-dependent oxidoreductase family. Fe cation is required as a cofactor. As to expression, fruit.

The enzyme catalyses 1-aminocyclopropane-1-carboxylate + L-ascorbate + O2 = ethene + L-dehydroascorbate + hydrogen cyanide + CO2 + 2 H2O. It participates in alkene biosynthesis; ethylene biosynthesis via S-adenosyl-L-methionine; ethylene from S-adenosyl-L-methionine: step 2/2. This Cucumis melo (Muskmelon) protein is 1-aminocyclopropane-1-carboxylate oxidase 1 (ACO1).